The following is a 185-amino-acid chain: MISSFRAQCAARVVREGGVIAYPTEAVWGLGCDPWNEDAVYRLLALKARPVEKGLIVVAANIHQLDFLLEDLPDVWLDRLAGTWPGPNTWLVPHQERLPEWVTGVHDSVAVRVTDHPLVQELCHLTGPLISTSANPAGRPAARTRLRVEQYFHDELDAILGGALGGRRNPSLIRDLVTGQVIRPA.

In terms of domain architecture, YrdC-like spans serine 4 to alanine 185.

Belongs to the SUA5 family. TsaC subfamily.

The protein localises to the cytoplasm. It catalyses the reaction L-threonine + hydrogencarbonate + ATP = L-threonylcarbamoyladenylate + diphosphate + H2O. Its function is as follows. Required for the formation of a threonylcarbamoyl group on adenosine at position 37 (t(6)A37) in tRNAs that read codons beginning with adenine. Catalyzes the conversion of L-threonine, HCO(3)(-)/CO(2) and ATP to give threonylcarbamoyl-AMP (TC-AMP) as the acyladenylate intermediate, with the release of diphosphate. This is Threonylcarbamoyl-AMP synthase from Pseudomonas aeruginosa (strain UCBPP-PA14).